Consider the following 366-residue polypeptide: Proline-rich protein 19 (366 aa).

4 disordered regions span residues 1 to 53, 102 to 149, 256 to 286, and 301 to 338; these read MDPR…RDPC, ESHT…DLPV, TPAH…AAWG, and ATPP…WSPN. Basic residues predominate over residues 18 to 29; that stretch reads GRIRRRKTRRER. Polar residues-rich tracts occupy residues 104–113 and 256–265; these read HTPQLPTKPS and TPAHRGSQVQ. Residues 275–286 show a composition bias toward low complexity; the sequence is SSASSPSGAAWG. The segment covering 302 to 326 has biased composition (pro residues); the sequence is TPPPPPPQPWDVRPPQPLPQPPSPL.

Interacts with CNTD1. Preferentially expressed in gonads.

It localises to the nucleus. The protein resides in the chromosome. In terms of biological role, promotes meiotic crossing over formation through its interaction with CNTD1 by participating in the crossover differentiation step of crossover-specific recombination intermediates. This chain is Proline-rich protein 19, found in Mus musculus (Mouse).